We begin with the raw amino-acid sequence, 698 residues long: MARKTPIERYRNIGICAHVDAGKTTTTERILFYTGLSHKIGEVHDGAATMDWMVQEQERGITITSAATTTFWRGMEAQFQEHRINIIDTPGHVDFTIEVERSLRVLDGAVVVFCGTSGVEPQSETVWRQADKYGVPRMVFVNKMDRAGADFLRVVGQIKHRLGANPVPIQLNIGAEEEFKGVIDLIKMKAINWNEADQGMSFTYEEIPADMLELAQEWRNHLVEAAAEASEELMEKYLEDGELSEVEIKQALRQRTINNEIVLAACGSAFKNKGVQAVLDAVIEFLPSPTDVPAIKGIDDRENSVERHADDNEPFSSLAFKIATDPFVGSLTFIRVYSGVVNSGDAVYNSVKQKKERFGRIVQMHANKRDEIKEIRAGDIAAAIGLKDVTTGDTLCDPNHVVILERMEFPEPVIQIAVEPRSKADQEKMGIALGKLAAEDPSFRVETDAETGQTLISGMGELHLDIIVDRMKREFGVDCNVGKPQVAYRETIRGKSEVEGKFVRQSGGRGQYGHVWLKIEPAEPGQGFVFVDAIAGGVIPKEFINPVAKGIEEQMNNGVLAGYPVLDVKATLFDGSFHDVDSSEMAFKIAGSMAFKKGALEAQPVLLEPLMKVEITTPEDWMGDVVGDLNRRRGIIEGMDEGPAGLKIIHAKVPLSEMFGYATDLRSATQGRASYSMEFAEYADVPKNIADAIIAEHG.

The tr-type G domain occupies 8 to 290 (ERYRNIGICA…AVIEFLPSPT (283 aa)). GTP contacts are provided by residues 17-24 (AHVDAGKT), 88-92 (DTPGH), and 142-145 (NKMD).

It belongs to the TRAFAC class translation factor GTPase superfamily. Classic translation factor GTPase family. EF-G/EF-2 subfamily.

Its subcellular location is the cytoplasm. Its function is as follows. Catalyzes the GTP-dependent ribosomal translocation step during translation elongation. During this step, the ribosome changes from the pre-translocational (PRE) to the post-translocational (POST) state as the newly formed A-site-bound peptidyl-tRNA and P-site-bound deacylated tRNA move to the P and E sites, respectively. Catalyzes the coordinated movement of the two tRNA molecules, the mRNA and conformational changes in the ribosome. This is Elongation factor G 1 from Vibrio cholerae serotype O1 (strain ATCC 39315 / El Tor Inaba N16961).